We begin with the raw amino-acid sequence, 793 residues long: Splicing factor 3A subunit 1 (793 aa).

Residues 1–42 (MPAGPVQAVPPPPPAATEPKQPTEEEASSKEDSTPSKPVVGI) form a disordered region. Lys-20 is covalently cross-linked (Glycyl lysine isopeptide (Lys-Gly) (interchain with G-Cter in SUMO2)). A compositionally biased stretch (basic and acidic residues) spans 21–34 (QPTEEEASSKEDST). The SURP motif 1 repeat unit spans residues 52 to 94 (IVDKTASFVARNGPEFEARIRQNEINNPKFNFLNPNDPYHAYY). At Lys-55 the chain carries N6-acetyllysine. A Glycyl lysine isopeptide (Lys-Gly) (interchain with G-Cter in SUMO2) cross-link involves residue Lys-131. An SURP motif 2 repeat occupies 166–208 (VVKLTAQFVARNGRQFLTQLMQKEQRNYQFDFLRPQHSLFNYF). Residues 318–412 (GESEEVEMEV…PAPAPDEYLV (95 aa)) form a disordered region. A phosphoserine mark is found at Ser-320, Ser-329, and Ser-359. Composition is skewed to acidic residues over residues 320 to 334 (SEEV…EEDE) and 354 to 364 (DMDEGSDDEEE). Over residues 368 to 384 (VPPPPETPMPPPLPPTP) the composition is skewed to pro residues. Basic and acidic residues predominate over residues 388 to 397 (IVRKDYDPKA). Ser-413 is subject to Phosphoserine. Lys-424 is covalently cross-linked (Glycyl lysine isopeptide (Lys-Gly) (interchain with G-Cter in SUMO2)). A Phosphoserine modification is found at Ser-451. Tyr-456 is subject to Phosphotyrosine. Over residues 488–502 (IGEEEIQKPEEKVTW) the composition is skewed to basic and acidic residues. Disordered stretches follow at residues 488-518 (IGEE…AAQA), 530-584 (HKAK…AMPP), and 666-685 (PMPP…SKKL). A Glycyl lysine isopeptide (Lys-Gly) (interchain with G-Cter in SUMO2) cross-link involves residue Lys-499. Ser-508 carries the post-translational modification Phosphoserine. The segment covering 509 to 518 (MARTQQAAQA) has biased composition (polar residues). Lys-542 participates in a covalent cross-link: Glycyl lysine isopeptide (Lys-Gly) (interchain with G-Cter in SUMO2). Positions 563–572 (ATNIPSSAPP) are enriched in polar residues. Positions 666–675 (PMPPVHPPPP) are enriched in pro residues. The segment at 680–702 (PASKKLKTEDSLMPEEEFLRRNK) is required and sufficient for nuclear import. Lys-686 participates in a covalent cross-link: Glycyl lysine isopeptide (Lys-Gly) (interchain with G-Cter in SUMO2). One can recognise a Ubiquitin-like domain in the interval 707–793 (IKVQVPNMQD…ALKERGGRKK (87 aa)). Tyr-759 carries the phosphotyrosine modification.

Component of the 17S U2 SnRNP complex, a ribonucleoprotein complex that contains small nuclear RNA (snRNA) U2 and a number of specific proteins. Part of the SF3A subcomplex of the 17S U2 SnRNP complex which is composed of three subunits; SF3A3/SAP61, SF3A2/SAP62 and SF3A1/SAP114. SF3A associates with the splicing factor SF3B and a 12S RNA unit to form the mature 17S U2 small nuclear ribonucleoprotein complex (17S U2 snRNP). SF3A1 functions as a scaffold that interacts directly with both SF3A2 and SF3A3. Identified in the spliceosome 'E' complex, a precursor of the spliceosome 'A' complex. Identified in the spliceosome 'A' and 'B' complexes. Identified in the spliceosome 'C' complex. Interacts with P2RX6; resulting in a reduction of the splicing activity.

It is found in the nucleus. Its subcellular location is the nucleus speckle. In terms of biological role, component of the 17S U2 SnRNP complex of the spliceosome, a large ribonucleoprotein complex that removes introns from transcribed pre-mRNAs. The 17S U2 SnRNP complex (1) directly participates in early spliceosome assembly and (2) mediates recognition of the intron branch site during pre-mRNA splicing by promoting the selection of the pre-mRNA branch-site adenosine, the nucleophile for the first step of splicing. Within the 17S U2 SnRNP complex, SF3A1 is part of the SF3A subcomplex that contributes to the assembly of the 17S U2 snRNP, and the subsequent assembly of the pre-spliceosome 'E' complex and the pre-catalytic spliceosome 'A' complex. Involved in pre-mRNA splicing as a component of pre-catalytic spliceosome 'B' complexes. This chain is Splicing factor 3A subunit 1 (SF3A1), found in Bos taurus (Bovine).